A 143-amino-acid chain; its full sequence is Transmembrane protein 80 (143 aa).

Transmembrane regions (helical) follow at residues 22–42 (LLCLSGTYYALYFLATLLLLV), 47–67 (VFTYPHSCLVLDLTLLFLMGI), 88–108 (LAASLVLTVGSALLSAYFLLW), and 122–142 (PLLALHGLEAVLQVVAIAAFV).

The protein resides in the membrane. The protein localises to the cell projection. It is found in the cilium. The polypeptide is Transmembrane protein 80 (TMEM80) (Bos taurus (Bovine)).